A 341-amino-acid polypeptide reads, in one-letter code: tRNA N6-adenosine threonylcarbamoyltransferase (341 aa).

Histidine 111 and histidine 115 together coordinate Fe cation. Substrate-binding positions include 134-138, aspartate 167, glycine 180, and asparagine 276; that span reads LVSGG. Aspartate 304 serves as a coordination point for Fe cation.

The protein belongs to the KAE1 / TsaD family. Requires Fe(2+) as cofactor.

Its subcellular location is the cytoplasm. It catalyses the reaction L-threonylcarbamoyladenylate + adenosine(37) in tRNA = N(6)-L-threonylcarbamoyladenosine(37) in tRNA + AMP + H(+). Its function is as follows. Required for the formation of a threonylcarbamoyl group on adenosine at position 37 (t(6)A37) in tRNAs that read codons beginning with adenine. Is involved in the transfer of the threonylcarbamoyl moiety of threonylcarbamoyl-AMP (TC-AMP) to the N6 group of A37, together with TsaE and TsaB. TsaD likely plays a direct catalytic role in this reaction. This Pseudomonas syringae pv. tomato (strain ATCC BAA-871 / DC3000) protein is tRNA N6-adenosine threonylcarbamoyltransferase.